We begin with the raw amino-acid sequence, 221 residues long: Serine/arginine-rich splicing factor 2 (221 aa).

Ser-2 carries the N-acetylserine modification. Ser-2 carries the phosphoserine modification. An RRM domain is found at 14-92 (TSLKVDNLTY…RELRVQMARY (79 aa)). Phosphothreonine occurs at positions 22 and 25. Ser-26 is subject to Phosphoserine. Lys-52 bears the N6-acetyllysine mark. A disordered region spans residues 92 to 221 (YGRPPDSHHS…SPEEEGAVSS (130 aa)). Composition is skewed to basic residues over residues 117–171 (RRSR…RSKS) and 179–189 (SRSRSRSRSRS). A phosphoserine mark is found at Ser-189, Ser-191, Ser-204, Ser-206, Ser-208, Ser-212, and Ser-220. Over residues 212–221 (SPEEEGAVSS) the composition is skewed to acidic residues.

Belongs to the splicing factor SR family. In vitro, self-associates and binds SRSF1/SFRS1 (ASF/SF2), SNRP70 and U2AF1 but not U2AF2. Binds SREK1/SFRS12. Interacts with CCNL1 and CCNL2. Interacts with SCAF11. Interacts with ZRSR2/U2AF1-RS2. Interacts with CCDC55 (via C-terminus). Interacts with BRDT. Extensively phosphorylated on serine residues in the RS domain. Phosphorylated by SRPK2 and this causes its redistribution from the nuclear speckle to nucleoplasm and controls cell fate decision in response to cisplatin treatment. KAT5/TIP60 inhibits its phosphorylation by preventing SRPK2 nuclear translocation. Post-translationally, acetylation on Lys-52 by KAT5/TIP60 promotes its proteasomal degradation. This effect is counterbalanced by HDAC6, which positively controls SRSF2 protein level by deacetylating it and preventing its proteasomal degradation.

It is found in the nucleus. The protein localises to the nucleoplasm. It localises to the nucleus speckle. Functionally, necessary for the splicing of pre-mRNA. It is required for formation of the earliest ATP-dependent splicing complex and interacts with spliceosomal components bound to both the 5'- and 3'-splice sites during spliceosome assembly. It also is required for ATP-dependent interactions of both U1 and U2 snRNPs with pre-mRNA. Interacts with other spliceosomal components, via the RS domains, to form a bridge between the 5'- and 3'-splice site binding components, U1 snRNP and U2AF. Binds to purine-rich RNA sequences, either 5'-AGSAGAGTA-3' (S=C or G) or 5'-GTTCGAGTA-3'. Can bind to beta-globin mRNA and commit it to the splicing pathway. The phosphorylated form (by SRPK2) is required for cellular apoptosis in response to cisplatin treatment. This Pan troglodytes (Chimpanzee) protein is Serine/arginine-rich splicing factor 2 (SRSF2).